The chain runs to 101 residues: Small ribosomal subunit protein uS10 (101 aa).

The protein belongs to the universal ribosomal protein uS10 family. Part of the 30S ribosomal subunit.

In terms of biological role, involved in the binding of tRNA to the ribosomes. The chain is Small ribosomal subunit protein uS10 from Mycobacterium leprae (strain Br4923).